A 385-amino-acid polypeptide reads, in one-letter code: Deoxyguanosinetriphosphate triphosphohydrolase-like protein (385 aa).

An HD domain is found at 62–197 (RLTHSLEVAQ…VSLADDIAYS (136 aa)).

Belongs to the dGTPase family. Type 2 subfamily.

The chain is Deoxyguanosinetriphosphate triphosphohydrolase-like protein from Neorickettsia sennetsu (strain ATCC VR-367 / Miyayama) (Ehrlichia sennetsu).